A 441-amino-acid polypeptide reads, in one-letter code: Probable glycine dehydrogenase (decarboxylating) subunit 1 (441 aa).

It belongs to the GcvP family. N-terminal subunit subfamily. In terms of assembly, the glycine cleavage system is composed of four proteins: P, T, L and H. In this organism, the P 'protein' is a heterodimer of two subunits.

The enzyme catalyses N(6)-[(R)-lipoyl]-L-lysyl-[glycine-cleavage complex H protein] + glycine + H(+) = N(6)-[(R)-S(8)-aminomethyldihydrolipoyl]-L-lysyl-[glycine-cleavage complex H protein] + CO2. In terms of biological role, the glycine cleavage system catalyzes the degradation of glycine. The P protein binds the alpha-amino group of glycine through its pyridoxal phosphate cofactor; CO(2) is released and the remaining methylamine moiety is then transferred to the lipoamide cofactor of the H protein. This chain is Probable glycine dehydrogenase (decarboxylating) subunit 1, found in Halobacterium salinarum (strain ATCC 700922 / JCM 11081 / NRC-1) (Halobacterium halobium).